The chain runs to 644 residues: Chaperone protein DnaK (644 aa).

A Phosphothreonine; by autocatalysis modification is found at Thr-199. Residues 605–644 are disordered; sequence KKSSEGQAAQGQTQSQESTKPVEEGVVDAEFEEVKEEDKK. Polar residues predominate over residues 609–623; the sequence is EGQAAQGQTQSQEST. Residues 629-644 are compositionally biased toward acidic residues; sequence GVVDAEFEEVKEEDKK.

It belongs to the heat shock protein 70 family.

Its function is as follows. Acts as a chaperone. The chain is Chaperone protein DnaK from Legionella pneumophila (strain Paris).